The following is a 313-amino-acid chain: Ribosomal protein L11 methyltransferase (313 aa).

S-adenosyl-L-methionine is bound by residues Thr163, Gly184, Asp206, and Asn249.

The protein belongs to the methyltransferase superfamily. PrmA family.

The protein resides in the cytoplasm. The enzyme catalyses L-lysyl-[protein] + 3 S-adenosyl-L-methionine = N(6),N(6),N(6)-trimethyl-L-lysyl-[protein] + 3 S-adenosyl-L-homocysteine + 3 H(+). Methylates ribosomal protein L11. The chain is Ribosomal protein L11 methyltransferase from Brevibacillus brevis (strain 47 / JCM 6285 / NBRC 100599).